Consider the following 377-residue polypeptide: Mucin-7 (377 aa).

Residues 1-22 form the signal peptide; it reads MKTLPLFVCICALSACFSFSEG. The segment at 70 to 100 is disordered; that stretch reads CRPKLPPSPNNPPKFPNPHQPPKHPDKNSSV. A compositionally biased stretch (pro residues) spans 73-89; the sequence is KLPPSPNNPPKFPNPHQ. Residues Asn-97, Asn-128, Asn-135, and Asn-146 are each glycosylated (N-linked (GlcNAc...) asparagine). Residues 150-355 are disordered; it reads SVATLAPVNS…QPTSAPGQNK (206 aa). Tandem repeats lie at residues 165-187, 188-210, 211-233, 234-256, 257-279, and 280-302. A compositionally biased stretch (pro residues) spans 169–183; sequence PPTPSATTPAPPSSS. An O-linked (GalNAc) threonine; by GALNT13 glycan is attached at Thr-176. O-linked (GalNAc) serine; by GALNT13 glycans are attached at residues Ser-182 and Ser-183. Residues 184–214 show a composition bias toward low complexity; the sequence is APPETTAAPPTPSATTQAPPSSSAPPETTAA. O-linked (GalNAc) threonine; by GALNT13 glycans are attached at residues Thr-188 and Thr-189. Pro residues predominate over residues 215 to 229; that stretch reads PPTPPATTPAPPSSS. Low complexity predominate over residues 230–283; sequence APPETTAAPPTPSATTPAPLSSSAPPETTAVPPTPSATTLDPSSASAPPETTAA. The span at 284-298 shows a compositional bias: pro residues; that stretch reads PPTPSATTPAPPSSP. Residues 309–329 show a composition bias toward polar residues; it reads TTPNSSPTTLAPDTSETSAAP. Residues 330 to 348 are compositionally biased toward low complexity; it reads THQTTTSVTTQTTTTKQPT.

Monomer. N- and O-glycosylated. Contains fucose, mannose, galactose, N-acetylglucosamine and N-acetylgalactosamine. As to expression, expressed in salivary gland tissues and only in those that contain mucous acinar cells (e.g. sublingual and submandibular glands) and not in salivary glands containing only serous acinar cells (e.g. parotid gland).

It localises to the secreted. Functionally, may function in a protective capacity by promoting the clearance of bacteria in the oral cavity and aiding in mastication, speech, and swallowing. Binds P.aeruginosa pili. The sequence is that of Mucin-7 (MUC7) from Homo sapiens (Human).